A 714-amino-acid chain; its full sequence is Fatty acid oxidation complex subunit alpha (714 aa).

The enoyl-CoA hydratase stretch occupies residues M1 to P190. Residues A306–Q714 are 3-hydroxyacyl-CoA dehydrogenase.

It in the N-terminal section; belongs to the enoyl-CoA hydratase/isomerase family. The protein in the central section; belongs to the 3-hydroxyacyl-CoA dehydrogenase family. Heterotetramer of two alpha chains (FadJ) and two beta chains (FadI).

The protein localises to the cytoplasm. The catalysed reaction is a (3S)-3-hydroxyacyl-CoA = a (2E)-enoyl-CoA + H2O. It catalyses the reaction a 4-saturated-(3S)-3-hydroxyacyl-CoA = a (3E)-enoyl-CoA + H2O. It carries out the reaction a (3S)-3-hydroxyacyl-CoA + NAD(+) = a 3-oxoacyl-CoA + NADH + H(+). The enzyme catalyses (3S)-3-hydroxybutanoyl-CoA = (3R)-3-hydroxybutanoyl-CoA. It participates in lipid metabolism; fatty acid beta-oxidation. Functionally, catalyzes the formation of a hydroxyacyl-CoA by addition of water on enoyl-CoA. Also exhibits 3-hydroxyacyl-CoA epimerase and 3-hydroxyacyl-CoA dehydrogenase activities. The protein is Fatty acid oxidation complex subunit alpha of Escherichia coli (strain SE11).